We begin with the raw amino-acid sequence, 186 residues long: Elongation factor P (186 aa).

This sequence belongs to the elongation factor P family.

Its subcellular location is the cytoplasm. It functions in the pathway protein biosynthesis; polypeptide chain elongation. Involved in peptide bond synthesis. Stimulates efficient translation and peptide-bond synthesis on native or reconstituted 70S ribosomes in vitro. Probably functions indirectly by altering the affinity of the ribosome for aminoacyl-tRNA, thus increasing their reactivity as acceptors for peptidyl transferase. In Maridesulfovibrio salexigens (strain ATCC 14822 / DSM 2638 / NCIMB 8403 / VKM B-1763) (Desulfovibrio salexigens), this protein is Elongation factor P.